The chain runs to 286 residues: Merozoite surface protein 2 (286 aa).

The signal sequence occupies residues 1 to 20 (MKVIKTLSIINFFIFVTFNI). Asparagine 22 and asparagine 36 each carry an N-linked (GlcNAc...) asparagine glycan. The disordered stretch occupies residues 43-248 (MTESKTPTPT…SQKECTDGNK (206 aa)). The segment at 44 to 212 (TESKTPTPTG…EQTESPELQS (169 aa)) is polymorphic region. The segment covering 54 to 68 (AGAGASGSAGSGDGA) has biased composition (gly residues). Repeat 1 spans residues 59 to 68 (SGSAGSGDGA). Residues 59–106 (SGSAGSGDGASGSASGSASGSASGSAGASGSASGSAGASGSASGSAGA) form a 5 X 10 AA tandem repeats of S-G-S-A-[GS]-[GS]-[AD]-G-A region. One copy of the 2; partial repeat lies at 69-76 (SGSASGSA). The segment covering 69–137 (SGSASGSASG…STSTSSENPN (69 aa)) has biased composition (low complexity). Repeat copies occupy residues 77–86 (SGSASGSAGA), 88–96 (GSASGSAGA), and 97–106 (SGSASGSAGA). 2 stretches are compositionally biased toward polar residues: residues 153–179 (KPNQANKETQNNSNVQQDSQTKSNVPP) and 186–214 (KSPTAQPEQAENSAPTAEQTESPELQSAP). Residue asparagine 163 is glycosylated (N-linked (GlcNAc...) asparagine). Asparagine 235 carries N-linked (GlcNAc...) asparagine glycosylation. Residues 239–248 (SQKECTDGNK) are compositionally biased toward basic and acidic residues. Cysteines 243 and 251 form a disulfide. Residues asparagine 259 and asparagine 260 are each glycosylated (N-linked (GlcNAc...) asparagine). Asparagine 260 carries GPI-anchor amidated asparagine lipidation. Positions 261–286 (SSNIASINKFVVLISATLVLSFAIFI) are cleaved as a propeptide — removed in mature form.

Its subcellular location is the cell membrane. May play a role in the merozoite attachment to the erythrocyte. This chain is Merozoite surface protein 2, found in Plasmodium falciparum (isolate 311).